The primary structure comprises 349 residues: Trans-enoyl reductase phmE (349 aa).

55 to 58 (CDWK) serves as a coordination point for NADP(+). Substrate is bound at residue 143–150 (TGIGTMGL). NADP(+) is bound by residues 182 to 185 (SPKN), Tyr-200, and 247 to 248 (LE). 267 to 271 (GMAIL) is a binding site for substrate. 336–337 (VS) contributes to the NADP(+) binding site.

This sequence belongs to the zinc-containing alcohol dehydrogenase family. As to quaternary structure, monomer.

It functions in the pathway mycotoxin biosynthesis. In terms of biological role, trans-enoyl reductase; part of the gene cluster that mediates the biosynthesis of the mycotoxins phomacins, leucine-derived cytochalasans with potent actin polymerization-inhibitory activities and monocot-specific antigerminative activities. The first step in the pathway is catalyzed by the hybrid PKS-NRPS phmA, assisted by the enoyl reductase phmE, that are responsible for fusion of the leucine precursor and the polyketide backbone to produce a 2-pyrrolidone intermediate. The polyketide synthase module (PKS) of phmA is responsible for the synthesis of the polyketide backbone and the downstream nonribosomal peptide synthetase (NRPS) amidates the carboxyl end of the polyketide with the leucine precursor. Because phmA lacks a designated enoylreductase (ER) domain, the required activity is provided the enoyl reductase phmE. Reduction by the hydrolyase phmG, followed by dehydration and intra-molecular Diels-Alder cyclization by the Diels-Alderase phmD then yield the required isoindolone-fused macrocycle. A number of oxidative steps catalyzed by the tailoring cytochrome P450 monooxygenase phmB, the FAD-linked oxidoreductase phmC and the short-chain dehydrogenase/reductase phmF, are further required to afford the final products, phomacin D and phomacin E. The polypeptide is Trans-enoyl reductase phmE (Phaeosphaeria nodorum (strain SN15 / ATCC MYA-4574 / FGSC 10173) (Glume blotch fungus)).